Here is a 330-residue protein sequence, read N- to C-terminus: Laforin (330 aa).

The 123-residue stretch at Met1 to Leu123 folds into the CBM20 domain. Ser25 is subject to Phosphoserine; by AMPK. Substrate contacts are provided by residues Trp32, Lys86, Gly102–Asp106, Asp196, Asp234, and Arg240. In terms of domain architecture, Tyrosine-protein phosphatase spans His155–Lys322. The active-site Phosphocysteine intermediate is the Cys265. The Glucan phosphatase signature motif CXAGXGR signature appears at Cys265–Arg271. Residues Asn266–Arg271 and Tyr303 contribute to the substrate site.

This sequence belongs to the protein-tyrosine phosphatase family. As to quaternary structure, homodimer. Interacts with PPP1R3B, PPP1R3C, HIRIP5, and EPM2AIP1. Binds glycogen and Lafora bodies. Interacts with NHLRC1/malin (via the NHL repeats). Forms a complex with NHLRC1/malin and HSP70. Interacts with PPP1R3D; in the presence of NHLC1/malin the interaction leads to ubiquitination and autophagic degradation of PPP1R3D. Interacts (via the phosphatase domain) with MAPT/Tau; the interaction dephosphorylates MAPT. Interacts with PRDM8. Polyubiquitinated by NHLRC1/malin. In terms of processing, phosphorylation on Ser-25 by AMPK affects the phosphatase activity of the enzyme and its ability to homodimerize and interact with NHLRC1, PPP1R3C or PRKAA2. In terms of tissue distribution, detected in skeletal muscle and in brain (at protein level). Widely expressed. Higher levels of expression are found in heart, brain, liver, skeletal muscle and kidney.

Its subcellular location is the cytoplasm. The protein localises to the endoplasmic reticulum membrane. It localises to the cell membrane. The enzyme catalyses O-phospho-L-tyrosyl-[protein] + H2O = L-tyrosyl-[protein] + phosphate. It carries out the reaction O-phospho-L-seryl-[protein] + H2O = L-seryl-[protein] + phosphate. It catalyses the reaction O-phospho-L-threonyl-[protein] + H2O = L-threonyl-[protein] + phosphate. Functionally, plays an important role in preventing glycogen hyperphosphorylation and the formation of insoluble aggregates, via its activity as glycogen phosphatase, and by promoting the ubiquitination of proteins involved in glycogen metabolism via its interaction with the E3 ubiquitin ligase NHLRC1/malin. Dephosphorylates phosphotyrosine and synthetic substrates, such as para-nitrophenylphosphate (pNPP), and has low activity with phosphoserine and phosphothreonine substrates (in vitro). Has also been shown to dephosphorylate MAPT. Shows strong phosphatase activity towards complex carbohydrates in vitro, avoiding glycogen hyperphosphorylation which is associated with reduced branching and formation of insoluble aggregates. Forms a complex with NHLRC1/malin and HSP70, which suppresses the cellular toxicity of misfolded proteins by promoting their degradation through the ubiquitin-proteasome system (UPS). Acts as a scaffold protein to facilitate PPP1R3C/PTG ubiquitination by NHLRC1/malin. Also promotes proteasome-independent protein degradation through the macroautophagy pathway. The sequence is that of Laforin (Epm2a) from Mus musculus (Mouse).